The primary structure comprises 78 residues: Small ribosomal subunit protein bS16c (78 aa).

Belongs to the bacterial ribosomal protein bS16 family.

Its subcellular location is the plastid. It is found in the chloroplast. The polypeptide is Small ribosomal subunit protein bS16c (Amborella trichopoda).